Here is a 452-residue protein sequence, read N- to C-terminus: tRNA modification GTPase MnmE (452 aa).

(6S)-5-formyl-5,6,7,8-tetrahydrofolate contacts are provided by R24, E81, and K120. The TrmE-type G domain occupies 217–373; sequence GIKTAIVGKT…LIMKIEQMHI (157 aa). N227 lines the K(+) pocket. Residues 227-232, 246-252, and 271-274 each bind GTP; these read NVGKSS, TDIHGTT, and DTAG. Mg(2+) is bound at residue S231. 3 residues coordinate K(+): T246, I248, and T251. A Mg(2+)-binding site is contributed by T252. K452 contributes to the (6S)-5-formyl-5,6,7,8-tetrahydrofolate binding site.

It belongs to the TRAFAC class TrmE-Era-EngA-EngB-Septin-like GTPase superfamily. TrmE GTPase family. In terms of assembly, homodimer. Heterotetramer of two MnmE and two MnmG subunits. Requires K(+) as cofactor.

It localises to the cytoplasm. Functionally, exhibits a very high intrinsic GTPase hydrolysis rate. Involved in the addition of a carboxymethylaminomethyl (cmnm) group at the wobble position (U34) of certain tRNAs, forming tRNA-cmnm(5)s(2)U34. The chain is tRNA modification GTPase MnmE from Mesoplasma florum (strain ATCC 33453 / NBRC 100688 / NCTC 11704 / L1) (Acholeplasma florum).